A 161-amino-acid polypeptide reads, in one-letter code: Protein yippee-like B0546.4 (161 aa).

The 98-residue stretch at 14–111 (SLYGCVVCNT…IENANFEKIA (98 aa)) folds into the Yippee domain. Positions 18, 21, 74, and 77 each coordinate Zn(2+). The interval 117–161 (PLGEDRQEAPPAPNLEMSRYPLEAEKKSRPQYRTVSVSSSSSAEC) is disordered. Low complexity predominate over residues 151–161 (VSVSSSSSAEC).

This sequence belongs to the yippee family.

The chain is Protein yippee-like B0546.4 from Caenorhabditis elegans.